A 109-amino-acid polypeptide reads, in one-letter code: Phycoerythrin alpha-2 subunit (109 aa).

(2R,3E)-phycoerythrobilin contacts are provided by Asp-52, Ser-53, Glu-63, Arg-64, Cys-67, Thr-72, Lys-74, Ala-75, and Lys-84.

This sequence belongs to the phycoerythrin family. As to quaternary structure, heterotetramer of 2 different alpha chains and 2 identical beta chains which form 2 alpha-beta heterodimers within the heterotetramer. The two alpha-beta heterodimers are rotated to an open configuration in contrast to the closed configuration found in other cryptophyte species due to the insertion of a single amino acid, Asp-65, in a conserved region of the alpha chain. In the open form, the central chromophores are not in physical contact but are separated by a water-filled channel. Contains three phycoerythrobilin chromophores with binding mediated by both the alpha and beta subunits.

The protein resides in the plastid. The protein localises to the chloroplast thylakoid membrane. Light-harvesting photosynthetic tetrapyrrole chromophore-protein from the phycobiliprotein complex. The protein is Phycoerythrin alpha-2 subunit of Hemiselmis andersenii (Cryptophyte alga).